The chain runs to 237 residues: MRPSRRAPDEMRAVSLERGVVKYAEGSCLVKFGDTHVLVTATLEDRLPPWLKGQGRGWITAEYGMLPRATLERTRREASAGKQTGRTVEIQRLIGRSLRTAIDLEALGERQITVDCDVLQADGGTRTASITGAWVALADCIRWMKARNMIKTEVLRTNVAAVSCGIYNGTPVLDLDYAEDSEAETDANFVMTGDGRIIEVQGTAEKTPFSEAEFLALMALARKGVGRLVDLQKMAVA.

Residues arginine 86 and 124–126 (GTR) contribute to the phosphate site.

It belongs to the RNase PH family. In terms of assembly, homohexameric ring arranged as a trimer of dimers.

It catalyses the reaction tRNA(n+1) + phosphate = tRNA(n) + a ribonucleoside 5'-diphosphate. Phosphorolytic 3'-5' exoribonuclease that plays an important role in tRNA 3'-end maturation. Removes nucleotide residues following the 3'-CCA terminus of tRNAs; can also add nucleotides to the ends of RNA molecules by using nucleoside diphosphates as substrates, but this may not be physiologically important. Probably plays a role in initiation of 16S rRNA degradation (leading to ribosome degradation) during starvation. The sequence is that of Ribonuclease PH from Bradyrhizobium sp. (strain ORS 278).